Consider the following 545-residue polypeptide: Glucose-6-phosphate isomerase (545 aa).

E351 serves as the catalytic Proton donor. Residues H382 and K510 contribute to the active site.

It belongs to the GPI family.

The protein resides in the cytoplasm. The enzyme catalyses alpha-D-glucose 6-phosphate = beta-D-fructose 6-phosphate. It functions in the pathway carbohydrate biosynthesis; gluconeogenesis. It participates in carbohydrate degradation; glycolysis; D-glyceraldehyde 3-phosphate and glycerone phosphate from D-glucose: step 2/4. In terms of biological role, catalyzes the reversible isomerization of glucose-6-phosphate to fructose-6-phosphate. The sequence is that of Glucose-6-phosphate isomerase from Shewanella baltica (strain OS155 / ATCC BAA-1091).